The sequence spans 332 residues: Long form salivary protein D7L1 (332 aa).

The first 21 residues, 1–21, serve as a signal peptide directing secretion; sequence MHSPKSFLLLAVVFVALRVTA. 2 disulfide bridges follow: Cys40–Cys77 and Cys73–Cys133. Trp61 lines the leukotriene E4 pocket. Lys176 contacts leukotriene E4. 3 disulfide bridges follow: Cys184–Cys219, Cys200–Cys331, and Cys259–Cys278. Positions 185 and 203 each coordinate noradrenaline. The noradrenaline site is built by Asp294 and Glu297.

The protein belongs to the PBP/GOBP family. Female mosquito salivary gland (at protein level).

The protein localises to the secreted. Its function is as follows. Modulates blood feeding of female mosquitoes on vertebrate species by binding and sequestering different mediators involved in the host response, such as biogenic amines and eicosanoids. Binds dopamine, serotonin, histamine, tryptamine, adrenaline, noradrenaline, leukotriene B4, leukotriene C4, leukotriene D4, leukotriene E4 and U-46619, a stable analog of thromboxane A2. Inhibits platelet aggregation induced by serotonin and low doses of thromboxane A2 analog U-46619 but not by high doses of U-46619, collagen or ADP. Prevents leukocyte recruitment. The polypeptide is Long form salivary protein D7L1 (Aedes albopictus (Asian tiger mosquito)).